We begin with the raw amino-acid sequence, 423 residues long: T-box protein 2 (423 aa).

The segment at residues 70 to 243 is a DNA-binding region (T-box); the sequence is LWQQFSQCGT…NNPFAKGFRD (174 aa). Disordered stretches follow at residues 238-324 and 384-423; these read AKGF…PLRS and VEAT…LSKP. A compositionally biased stretch (polar residues) spans 261-283; the sequence is DATQSPPGKTASLPTHSPHPSES. Positions 302-317 are enriched in low complexity; sequence TPTTSSLSTSTTPTLS. Over residues 394-404 the composition is skewed to basic and acidic residues; the sequence is AEKPEVKKEQK.

In terms of processing, sumoylated. In terms of tissue distribution, expressed in body wall muscles and a subset of pharyngeal neurons. Expressed in head neurons and occassionally tail neurons. Not expressed in the pharynx.

The protein localises to the nucleus. Functionally, involved in the transcriptional regulation of genes required for the development of pharyngeal muscles derived from the ABa lineage. Acts as a transcriptional repressor and binds to T-box binding sites in its own promoter to negatively autoregulate its own expression in neurons, seam cells and the gut in order to restrict its expression to certain tissues. May function together with the nfya-1-NF-Y complex to repress its own expression. Plays a role in neural fate specification in the hermaphrodite-specific neuron (HSN)/PHB neuron lineage, acting in concert with homeobox protein egl-5 and the asymmetric cell division protein ham-1. This is T-box protein 2 from Caenorhabditis elegans.